A 241-amino-acid chain; its full sequence is Terpene cyclase olcD (241 aa).

Transmembrane regions (helical) follow at residues 19 to 39 (LSDILLVTLASGWLVCYFATI), 49 to 71 (WMPLLPLSCNVAWELVFITLYPP), 76 to 95 (ILGFWLLVNLGVIYSALRFA), 108 to 128 (YLPVLFVLAVGFWAWGHLALI), 137 to 157 (FYYGGMACQLMTSAAALSGLV), 166 to 186 (SYTIWLSRVIGTSSALAGLFF), and 202 to 222 (LMRWLAAAFGILDGVYGVQFW).

The protein belongs to the paxB family.

Its subcellular location is the membrane. It participates in secondary metabolite biosynthesis; terpenoid biosynthesis. Functionally, terpene cyclase; part of the gene cluster that mediates the biosynthesis of 15-deoxyoxalicine B. The first step of the pathway is the synthesis of nicotinyl-CoA from nicotinic acid by the nicotinic acid-CoA ligase olcI. Nicotinyl-CoA is then a substrate of polyketide synthase olcA to produce 4-hydroxy-6-(3-pyridinyl)-2H-pyran-2-one (HPPO) which is further prenylated by the polyprenyl transferase olcH to yield geranylgeranyl-HPPO. Geranylgeranyl pyrophosphate is provided by the cluster-specific geranylgeranyl pyrophosphate synthase olcC. The FAD-dependent monooxygenase olcE catalyzes the epoxidation of geranylgeranyl-HPPO and the terpene cyclase olcD catalyzes the cyclization of the terpenoid component, resulting in the formation of the tricyclic terpene moiety seen in predecaturin E. The cytochrome P450 monooxygenase then catalyzes the allylic oxidation of predecaturin E, which is followed by spirocylization with concomitant loss of one molecule of water to form decaturin E. Decaturin E is the substrate of the cytochrome P450 monooxygenase olcJ which hydroxylates it at the C-29 position to form decaturin F. The short-chain dehydrogenase/reductase olcF may catalyze the oxidation of decaturin F to generate the 29-hydroxyl-27-one intermediate, and subsequent hemiacetal formation probably leads to the formation of decaturin C. The dioxygenase olcK may be a peroxisomal enzyme that catalyzes the hydroxylation of decaturin C into decaturin A once decaturin C is shuttled into the peroxisome by the MFS transporter olcL. Finally the cytochrome P450 monooxygenase olcB catalyzes the oxidative rearrangement to yield 15-deoxyoxalicine B. In the absence of olcJ, decaturin E may be shunted to a pathway in which it is oxidized to a ketone, possibly by olcF, to form decaturin D, which undergoes further allylic oxidation to yield decaturin G. Moreover, in the absence of oclK or oclL, oclB can convert decaturin C into 15-deoxyoxalicine A. The chain is Terpene cyclase olcD from Penicillium canescens.